The sequence spans 466 residues: 20-hydroxyecdysone protein (466 aa).

A signal peptide spans 1–16 (MKPVALILVFLAISQA). The 1; approximate repeat unit spans residues 48-50 (EVK). The tract at residues 48-157 (EVKAEEVKPE…EIKKEATEIK (110 aa)) is 16 X repeats. Residues 53–55 (EVK) form a 2; approximate repeat. A disordered region spans residues 55-94 (KPEEVKPIAQEEKAKDLKEEVKPEIKPEIKEQPKPDIKDE). Residues 58 to 60 (EVK) form a 3; approximate repeat. The 4; approximate repeat unit spans residues 70 to 72 (DLK). The 5; approximate repeat unit spans residues 74-76 (EVK). The stretch at 78 to 80 (EIK) is one 6; approximate repeat. A 7; approximate repeat occupies 82–84 (EIK). An 8; approximate repeat occupies 90–92 (DIK). One copy of the 9; approximate repeat lies at 94–96 (EIK). A 10; approximate repeat occupies 98–100 (DLK). One copy of the 11; approximate repeat lies at 102–104 (DIK). One copy of the 12; approximate repeat lies at 106–108 (ELK). The interval 119-220 (PNAKPLELKE…QQSTTQGNFV (102 aa)) is disordered. The segment covering 124 to 160 (LELKEKSLEAEEKPQEIKEEVQQPEIKKEATEIKEEP) has biased composition (basic and acidic residues). Residues 125-127 (ELK) form a 13; approximate repeat. The 14; approximate repeat unit spans residues 139 to 141 (EIK). Residues 148-150 (EIK) form a 15; approximate repeat. The 16; approximate repeat unit spans residues 155-157 (EIK). A compositionally biased stretch (low complexity) spans 170–180 (AEETVVVPAEE). The span at 185 to 194 (PVEQEQSENQ) shows a compositional bias: polar residues. Positions 203–216 (QATQATPTQQSTTQ) are enriched in low complexity. Residues N294 and N352 are each glycosylated (N-linked (GlcNAc...) asparagine). Residues 378–435 (RPQNAPAAAPATQATEKPAVDDKIDPANDEVGEFVPESDNELRASGENIDDSFEDAGV) are disordered. A compositionally biased stretch (low complexity) spans 379 to 394 (PQNAPAAAPATQATEK). Positions 404-416 (ANDEVGEFVPESD) are enriched in acidic residues.

It is found in the secreted. Its function is as follows. Probably has an essential role in embryogenesis, induces morphogenesis of imaginal disks, and may participate in multimolecular aggregates. The sequence is that of 20-hydroxyecdysone protein (ImpE2) from Drosophila melanogaster (Fruit fly).